We begin with the raw amino-acid sequence, 123 residues long: Small ribosomal subunit protein uS12 (123 aa).

The segment at 1 to 32 is disordered; the sequence is MPTIQQLVRKGRTDKISKNKTPALKGSPQRRG. Asp89 carries the 3-methylthioaspartic acid modification. Residues 103 to 123 form a disordered region; sequence DTQGVKGRKQARSRYGAKKEK. Residues 108–123 show a composition bias toward basic residues; it reads KGRKQARSRYGAKKEK.

It belongs to the universal ribosomal protein uS12 family. Part of the 30S ribosomal subunit. Contacts proteins S8 and S17. May interact with IF1 in the 30S initiation complex.

Its function is as follows. With S4 and S5 plays an important role in translational accuracy. In terms of biological role, interacts with and stabilizes bases of the 16S rRNA that are involved in tRNA selection in the A site and with the mRNA backbone. Located at the interface of the 30S and 50S subunits, it traverses the body of the 30S subunit contacting proteins on the other side and probably holding the rRNA structure together. The combined cluster of proteins S8, S12 and S17 appears to hold together the shoulder and platform of the 30S subunit. The sequence is that of Small ribosomal subunit protein uS12 from Cutibacterium acnes (strain DSM 16379 / KPA171202) (Propionibacterium acnes).